A 72-amino-acid polypeptide reads, in one-letter code: Small ribosomal subunit protein bS18 (72 aa).

This sequence belongs to the bacterial ribosomal protein bS18 family. In terms of assembly, part of the 30S ribosomal subunit. Forms a tight heterodimer with protein bS6.

Functionally, binds as a heterodimer with protein bS6 to the central domain of the 16S rRNA, where it helps stabilize the platform of the 30S subunit. This chain is Small ribosomal subunit protein bS18, found in Francisella tularensis subsp. novicida (strain U112).